A 525-amino-acid polypeptide reads, in one-letter code: Putative ribose/galactose/methyl galactoside import ATP-binding protein (525 aa).

Positions 1–30 (MFGSATANPPAQRDLPSSDSDSPTPDAQPP) are disordered. The segment covering 14-25 (DLPSSDSDSPTP) has biased composition (low complexity). 2 consecutive ABC transporter domains span residues 33 to 269 (LEIS…VGRE) and 279 to 523 (KPPG…SGHK). 65-72 (GENGAGKS) is an ATP binding site.

It belongs to the ABC transporter superfamily. Carbohydrate importer 2 (CUT2) (TC 3.A.1.2) family.

The protein resides in the cell inner membrane. The enzyme catalyses D-ribose(out) + ATP + H2O = D-ribose(in) + ADP + phosphate + H(+). It catalyses the reaction D-galactose(out) + ATP + H2O = D-galactose(in) + ADP + phosphate + H(+). Part of an ABC transporter complex involved in carbohydrate import. Could be involved in ribose, galactose and/or methyl galactoside import. Responsible for energy coupling to the transport system. This is Putative ribose/galactose/methyl galactoside import ATP-binding protein from Pseudomonas savastanoi pv. phaseolicola (strain 1448A / Race 6) (Pseudomonas syringae pv. phaseolicola (strain 1448A / Race 6)).